The sequence spans 328 residues: Phenylalanine--tRNA ligase alpha subunit (328 aa).

Residue Glu245 participates in Mg(2+) binding.

It belongs to the class-II aminoacyl-tRNA synthetase family. Phe-tRNA synthetase alpha subunit type 1 subfamily. As to quaternary structure, tetramer of two alpha and two beta subunits. Mg(2+) is required as a cofactor.

It localises to the cytoplasm. It catalyses the reaction tRNA(Phe) + L-phenylalanine + ATP = L-phenylalanyl-tRNA(Phe) + AMP + diphosphate + H(+). The chain is Phenylalanine--tRNA ligase alpha subunit from Helicobacter pylori (strain Shi470).